The primary structure comprises 257 residues: Snake venom serine protease Dav-KN (257 aa).

The signal sequence occupies residues 1–18; it reads MVLIRVLANLLILQLSYA. Positions 19–24 are excised as a propeptide; the sequence is QKSSEL. Residues 25–248 enclose the Peptidase S1 domain; the sequence is VIGGDECNIN…HLDWIKGIIA (224 aa). 5 disulfide bridges follow: Cys-31–Cys-162, Cys-49–Cys-65, Cys-97–Cys-255, Cys-173–Cys-188, and Cys-199–Cys-224. Residues His-64 and Asp-109 each act as charge relay system in the active site. Ser-203 (charge relay system) is an active-site residue.

This sequence belongs to the peptidase S1 family. Snake venom subfamily. Monomer. Expressed by the venom gland.

It is found in the secreted. Its function is as follows. Snake venom serine protease that may act in the hemostasis system of the prey. This Deinagkistrodon acutus (Hundred-pace snake) protein is Snake venom serine protease Dav-KN.